A 154-amino-acid chain; its full sequence is Interleukin-2 (154 aa).

The signal sequence occupies residues 1-20; the sequence is MYKLQFLSCIALTLALVANS. Threonine 23 is a glycosylation site (O-linked (GalNAc...) threonine). Cysteine 78 and cysteine 126 are oxidised to a cystine. Asparagine 111 carries N-linked (GlcNAc...) asparagine glycosylation.

Belongs to the IL-2 family.

It is found in the secreted. Functionally, cytokine produced by activated CD4-positive helper T-cells and to a lesser extend activated CD8-positive T-cells and natural killer (NK) cells that plays pivotal roles in the immune response and tolerance. Binds to a receptor complex composed of either the high-affinity trimeric IL-2R (IL2RA/CD25, IL2RB/CD122 and IL2RG/CD132) or the low-affinity dimeric IL-2R (IL2RB and IL2RG). Interaction with the receptor leads to oligomerization and conformation changes in the IL-2R subunits resulting in downstream signaling starting with phosphorylation of JAK1 and JAK3. In turn, JAK1 and JAK3 phosphorylate the receptor to form a docking site leading to the phosphorylation of several substrates including STAT5. This process leads to activation of several pathways including STAT, phosphoinositide-3-kinase/PI3K and mitogen-activated protein kinase/MAPK pathways. Functions as a T-cell growth factor and can increase NK-cell cytolytic activity as well. Promotes strong proliferation of activated B-cells and subsequently immunoglobulin production. Plays a pivotal role in regulating the adaptive immune system by controlling the survival and proliferation of regulatory T-cells, which are required for the maintenance of immune tolerance. Moreover, participates in the differentiation and homeostasis of effector T-cell subsets, including Th1, Th2, Th17 as well as memory CD8-positive T-cells. This Camelus bactrianus (Bactrian camel) protein is Interleukin-2 (IL2).